Here is a 629-residue protein sequence, read N- to C-terminus: MWNVDVTCIGGIRSGEATLRPGPNIVQASNFQGKSSFLAAIQTAIGTTGLLTEDHPLMENEDDGKVTLETDEETYTVSLTRATDSDEPAISRSGTPYLTRDQDQIAARLFAVLGEDNPIRAAVREENQERLTELLKKPLETENIDLRIEPLQREIKELEDEVAAAEAASADLPAAQQKVTRLQGELRDLNETRDELERKVDEETDQRALRDELTAKQSDLEREEARLERLENQVDRRKAQLDDKEAALESLDIPDSPTAEADIAEKQTRIDELAVKIDLLDDLHRSTKAIIDEGEIDLITDVERTLSGDTFSCFVCGAETTAEAVTERLNEISDRQESLREQRATLTEEVTQMQQRTREIESKRQQKAELEDEIKRLRVDIQEDQHEVRSIEATIEELQAEIEQREAEYEAAEKAGESHSAELKTIQQKIGSTETKLDRAQAELERIEAELQKRNDRQEQLETKRDELETLRQRRKQKYNELVNQFDAAMADIIGRFAPGFDGAYLDQKTDANDTVGFEINLARDGHTTDLDTLSEGERELVGIVTALAGYRTFSVGDRVPCILLDGIGQLAAEHIRHMIEYLENTAEILVTTAYPEAGSFDGETVSPEHWDVISHETAQSRDHPQITN.

2 coiled-coil regions span residues 139–282 (LETE…LLDD) and 318–487 (AETT…NQFD).

The protein belongs to the Sph1/Sph2 family.

It is found in the cytoplasm. May play a role in a late step of replication. In Halobacterium salinarum (Halobacterium halobium), this protein is Smc-like protein Sph1 (sph1).